The following is a 121-amino-acid chain: Large ribosomal subunit protein uL24 (121 aa).

This sequence belongs to the universal ribosomal protein uL24 family. As to quaternary structure, part of the 50S ribosomal subunit.

Its function is as follows. One of two assembly initiator proteins, it binds directly to the 5'-end of the 23S rRNA, where it nucleates assembly of the 50S subunit. Located at the polypeptide exit tunnel on the outside of the subunit. This is Large ribosomal subunit protein uL24 from Thermococcus kodakarensis (strain ATCC BAA-918 / JCM 12380 / KOD1) (Pyrococcus kodakaraensis (strain KOD1)).